We begin with the raw amino-acid sequence, 54 residues long: Large ribosomal subunit protein bL33 (54 aa).

This sequence belongs to the bacterial ribosomal protein bL33 family.

This is Large ribosomal subunit protein bL33 from Chloroflexus aggregans (strain MD-66 / DSM 9485).